The following is a 267-amino-acid chain: Putative methylsterol monooxygenase DDB_G0270946 (267 aa).

Helical transmembrane passes span 31–51 (FIAH…ADFI), 72–92 (YCAI…MYIF), and 110–130 (IPYL…YFYW). The 131-residue stretch at 119 to 249 (SSFIIEDFYF…FTYLDKIFGT (131 aa)) folds into the Fatty acid hydroxylase domain. Residues 132–136 (HRALH) carry the Histidine box-1 motif. Residues 145–149 (HKVHH) carry the Histidine box-2 motif. The Histidine box-3 motif lies at 224-230 (FHDYHHE).

Belongs to the sterol desaturase family. Fe cation serves as cofactor.

The protein localises to the endoplasmic reticulum membrane. It catalyses the reaction 4,4-dimethyl-5alpha-cholest-7-en-3beta-ol + 6 Fe(II)-[cytochrome b5] + 3 O2 + 5 H(+) = 4alpha-carboxy-4beta-methyl-5alpha-cholest-7-ene-3beta-ol + 6 Fe(III)-[cytochrome b5] + 4 H2O. The protein operates within steroid biosynthesis; zymosterol biosynthesis; zymosterol from lanosterol: step 3/6. This Dictyostelium discoideum (Social amoeba) protein is Putative methylsterol monooxygenase DDB_G0270946.